The chain runs to 182 residues: MDIISGFYNTINLAELSNAKTFGFNPNILEANVLNIAILLSGVIYLGRNFLTSALESRQQKVTEAIQEAEERLQQANVKLLDAEKQLTQAQTVIEQIKKEAEKTARTVKETILAQGKLDIERLTNNGKSSIEKAELQIKKQIQQHITDLAIKKVSAQMETFMTDNLQVKVIDTNIASLGGKI.

A helical transmembrane segment spans residues 33–51 (VLNIAILLSGVIYLGRNFL).

Belongs to the ATPase B chain family. As to quaternary structure, F-type ATPases have 2 components, F(1) - the catalytic core - and F(0) - the membrane proton channel. F(1) has five subunits: alpha(3), beta(3), gamma(1), delta(1), epsilon(1). F(0) has four main subunits: a(1), b(1), b'(1) and c(10-14). The alpha and beta chains form an alternating ring which encloses part of the gamma chain. F(1) is attached to F(0) by a central stalk formed by the gamma and epsilon chains, while a peripheral stalk is formed by the delta, b and b' chains.

It is found in the plastid. The protein resides in the chloroplast thylakoid membrane. F(1)F(0) ATP synthase produces ATP from ADP in the presence of a proton or sodium gradient. F-type ATPases consist of two structural domains, F(1) containing the extramembraneous catalytic core and F(0) containing the membrane proton channel, linked together by a central stalk and a peripheral stalk. During catalysis, ATP synthesis in the catalytic domain of F(1) is coupled via a rotary mechanism of the central stalk subunits to proton translocation. Its function is as follows. Component of the F(0) channel, it forms part of the peripheral stalk, linking F(1) to F(0). In Guillardia theta (Cryptophyte), this protein is ATP synthase subunit b, chloroplastic.